The sequence spans 141 residues: Protein MGF 100-2L (141 aa).

The protein belongs to the asfivirus MGF 100 family.

Functionally, plays a role in virus cell tropism, and may be required for efficient virus replication in macrophages. The chain is Protein MGF 100-2L from African swine fever virus (isolate Pig/Kenya/KEN-50/1950) (ASFV).